A 360-amino-acid polypeptide reads, in one-letter code: Transcription factor MYB39 (360 aa).

HTH myb-type domains are found at residues 10-62 (DKGV…MNYL) and 63-117 (RPDI…RKKL). 2 consecutive DNA-binding regions (H-T-H motif) follow at residues 38–62 (WRSL…MNYL) and 90–113 (WSKI…NTHM). A disordered region spans residues 299–324 (PSTGSVSVSPETTSLNHPSTAQHSSG).

The protein localises to the nucleus. This Arabidopsis thaliana (Mouse-ear cress) protein is Transcription factor MYB39 (MYB39).